The primary structure comprises 305 residues: ATP synthase gamma chain (305 aa).

The protein belongs to the ATPase gamma chain family. In terms of assembly, F-type ATPases have 2 components, CF(1) - the catalytic core - and CF(0) - the membrane proton channel. CF(1) has five subunits: alpha(3), beta(3), gamma(1), delta(1), epsilon(1). CF(0) has three main subunits: a, b and c.

The protein localises to the cell membrane. Functionally, produces ATP from ADP in the presence of a proton gradient across the membrane. The gamma chain is believed to be important in regulating ATPase activity and the flow of protons through the CF(0) complex. The polypeptide is ATP synthase gamma chain (Streptomyces avermitilis (strain ATCC 31267 / DSM 46492 / JCM 5070 / NBRC 14893 / NCIMB 12804 / NRRL 8165 / MA-4680)).